An 85-amino-acid polypeptide reads, in one-letter code: Small ribosomal subunit protein bS18 (85 aa).

The protein belongs to the bacterial ribosomal protein bS18 family. As to quaternary structure, part of the 30S ribosomal subunit. Forms a tight heterodimer with protein bS6.

Functionally, binds as a heterodimer with protein bS6 to the central domain of the 16S rRNA, where it helps stabilize the platform of the 30S subunit. In Hyphomonas neptunium (strain ATCC 15444), this protein is Small ribosomal subunit protein bS18.